The sequence spans 489 residues: Nuclear distribution protein PAC1 (489 aa).

Positions 66-98 form a coiled coil; it reads STVLRLQKKIIDLENEISNLNNIINSSNSDNNG. WD repeat units lie at residues 119–158, 164–205, 206–246, 249–291, 328–368, 389–428, and 437–486; these read QCEN…NTIP, AHTR…RTLN, GHEH…SLKS, GHSE…GLAM, IPLE…IAPH, GHSS…ETGS, and GHDG…NSIK.

It belongs to the WD repeat LIS1/nudF family. Self-associates. Interacts with NDL1 and dynein.

It is found in the cytoplasm. Its subcellular location is the cytoskeleton. It localises to the spindle pole. In terms of biological role, positively regulates the activity of the minus-end directed microtubule motor protein dynein. Plays a central role in positioning the mitotic spindle at the bud neck during cell division. Targets cytoplasmic dynein to microtubule plus ends, thereby promoting dynein-mediated microtubule sliding along the bud cortex and consequently the movement of the mitotic spindle to the bud neck. This Candida dubliniensis (strain CD36 / ATCC MYA-646 / CBS 7987 / NCPF 3949 / NRRL Y-17841) (Yeast) protein is Nuclear distribution protein PAC1.